Here is a 325-residue protein sequence, read N- to C-terminus: tRNA N6-adenosine threonylcarbamoyltransferase (325 aa).

Residues histidine 107, histidine 111, and tyrosine 127 each coordinate Fe cation. Substrate-binding positions include 127–131, aspartate 159, glycine 172, glutamate 176, and asparagine 257; that span reads YVSGG. Aspartate 285 contributes to the Fe cation binding site.

Belongs to the KAE1 / TsaD family. As to quaternary structure, monomer. Component of the KEOPS complex that consists of Kae1, Bud32, Cgi121 and Pcc1; the whole complex dimerizes. Fe(2+) serves as cofactor.

Its subcellular location is the cytoplasm. The catalysed reaction is L-threonylcarbamoyladenylate + adenosine(37) in tRNA = N(6)-L-threonylcarbamoyladenosine(37) in tRNA + AMP + H(+). Its function is as follows. Required for the formation of a threonylcarbamoyl group on adenosine at position 37 (t(6)A37) in tRNAs that read codons beginning with adenine. Is a component of the KEOPS complex that is probably involved in the transfer of the threonylcarbamoyl moiety of threonylcarbamoyl-AMP (TC-AMP) to the N6 group of A37. Kae1 likely plays a direct catalytic role in this reaction, but requires other protein(s) of the complex to fulfill this activity. This chain is tRNA N6-adenosine threonylcarbamoyltransferase, found in Thermococcus gammatolerans (strain DSM 15229 / JCM 11827 / EJ3).